We begin with the raw amino-acid sequence, 129 residues long: Snaclec rhodocetin subunit beta (129 aa).

One can recognise a C-type lectin domain in the interval 3–125 (RCPTTWSASK…EEKNAFLCKF (123 aa)). 3 disulfides stabilise this stretch: cysteine 4–cysteine 15, cysteine 32–cysteine 123, and cysteine 98–cysteine 115.

In terms of assembly, heterotetramer of subunit alpha, beta, gamma and delta; only the gamma and the delta subunits are disulfide-linked. Alpha-beta heterodimer and gamma-delta heterodimer associate orthogonally, giving a cruciform conformation. This heterotetramer may covalently dimerizes thanks to the gamma subunit. In terms of tissue distribution, expressed by the venom gland.

It localises to the secreted. Potent inhibitor of collagen-induced platelet aggregation. It acts by binding to the integrin alpha2A domain and blocks collagen binding to integrin alpha-2/beta-1 (ITGA2/ITGB1). The gamma/delta subunits mainly contribute to this activity. The chain is Snaclec rhodocetin subunit beta from Calloselasma rhodostoma (Malayan pit viper).